The primary structure comprises 164 residues: Peptidyl-prolyl cis-trans isomerase A-like 4G (164 aa).

A PPIase cyclophilin-type domain is found at 7 to 163 (FFDITVDGKP…KKITIADCGQ (157 aa)).

It belongs to the cyclophilin-type PPIase family. PPIase A subfamily.

It localises to the cytoplasm. The enzyme catalyses [protein]-peptidylproline (omega=180) = [protein]-peptidylproline (omega=0). In terms of biological role, PPIases accelerate the folding of proteins. It catalyzes the cis-trans isomerization of proline imidic peptide bonds in oligopeptides. This chain is Peptidyl-prolyl cis-trans isomerase A-like 4G (PPIAL4G), found in Homo sapiens (Human).